We begin with the raw amino-acid sequence, 299 residues long: CDP-abequose synthase (299 aa).

T117 contacts substrate. Y134 serves as the catalytic Proton acceptor.

This sequence belongs to the NAD(P)-dependent epimerase/dehydratase family.

It catalyses the reaction CDP-alpha-D-abequose + NADP(+) = CDP-4-dehydro-3,6-dideoxy-alpha-D-glucose + NADPH + H(+). It functions in the pathway bacterial outer membrane biogenesis; LPS O-antigen biosynthesis. The sequence is that of CDP-abequose synthase (rfbJ) from Salmonella typhimurium (strain LT2 / SGSC1412 / ATCC 700720).